Reading from the N-terminus, the 70-residue chain is Guanine nucleotide-binding protein subunit gamma-1 (70 aa).

A Cysteine methyl ester modification is found at C67. C67 carries the S-geranylgeranyl cysteine lipid modification. Positions 68-70 (TVL) are cleaved as a propeptide — removed in mature form.

Belongs to the G protein gamma family. As to quaternary structure, g proteins are composed of 3 units, alpha, beta and gamma. As to expression, predominantly expressed in the central nervous system.

The protein localises to the cell membrane. Functionally, guanine nucleotide-binding proteins (G proteins) are involved as a modulator or transducer in various transmembrane signaling systems. The beta and gamma chains are required for the GTPase activity, for replacement of GDP by GTP, and for G protein-effector interaction. The sequence is that of Guanine nucleotide-binding protein subunit gamma-1 (Ggamma1) from Drosophila melanogaster (Fruit fly).